The following is a 428-amino-acid chain: Peptidase B (428 aa).

The Mn(2+) site is built by Lys-195 and Asp-200. The active site involves Lys-207. The Mn(2+) site is built by Asp-218, Asp-277, and Glu-279. Arg-281 is a catalytic residue.

The protein belongs to the peptidase M17 family. Homohexamer. Mn(2+) is required as a cofactor.

The protein localises to the cytoplasm. It catalyses the reaction Release of an N-terminal amino acid, Xaa, from a peptide or arylamide. Xaa is preferably Glu or Asp but may be other amino acids, including Leu, Met, His, Cys and Gln.. In terms of biological role, probably plays an important role in intracellular peptide degradation. The sequence is that of Peptidase B from Klebsiella pneumoniae (strain 342).